The primary structure comprises 264 residues: Phycocyanobilin:ferredoxin oxidoreductase (264 aa).

The protein belongs to the HY2 family.

It catalyses the reaction (2R,3Z)-phycocyanobilin + 4 oxidized [2Fe-2S]-[ferredoxin] = biliverdin IXalpha + 4 reduced [2Fe-2S]-[ferredoxin] + 4 H(+). In terms of biological role, catalyzes the four-electron reduction of biliverdin IX-alpha (2-electron reduction at both the A and D rings); the reaction proceeds via an isolatable 2-electron intermediate, 181,182-dihydrobiliverdin. The chain is Phycocyanobilin:ferredoxin oxidoreductase (pcyA) from Prochlorococcus marinus (strain MIT 9313).